The primary structure comprises 395 residues: Transcription termination/antitermination protein NusA (395 aa).

The S1 motif domain occupies 137-201 (NSVLMGQVIL…TKKGLLLELS (65 aa)). 2 KH domains span residues 243-291 (SHNS…TLAL) and 331-378 (KVRL…NENE).

Belongs to the NusA family. In terms of assembly, monomer. Binds directly to the core enzyme of the DNA-dependent RNA polymerase and to nascent RNA.

Its subcellular location is the cytoplasm. Its function is as follows. Participates in both transcription termination and antitermination. The protein is Transcription termination/antitermination protein NusA of Helicobacter pylori (strain J99 / ATCC 700824) (Campylobacter pylori J99).